A 225-amino-acid chain; its full sequence is Ribonuclease 3 (225 aa).

The region spanning 5 to 127 is the RNase III domain; sequence IDKLERKLGY…IIGAIYLDSD (123 aa). Glu40 serves as a coordination point for Mg(2+). The active site involves Asp44. Residues Asp113 and Glu116 each coordinate Mg(2+). Glu116 is a catalytic residue. Residues 154–224 form the DRBM domain; the sequence is DPKTRLQEFL…AETALEQLTN (71 aa).

Belongs to the ribonuclease III family. In terms of assembly, homodimer. The cofactor is Mg(2+).

It is found in the cytoplasm. It carries out the reaction Endonucleolytic cleavage to 5'-phosphomonoester.. Digests double-stranded RNA. Involved in the processing of primary rRNA transcript to yield the immediate precursors to the large and small rRNAs (23S and 16S). Processes some mRNAs, and tRNAs when they are encoded in the rRNA operon. Processes pre-crRNA and tracrRNA of type II CRISPR loci if present in the organism. The protein is Ribonuclease 3 of Vibrio campbellii (strain ATCC BAA-1116).